The following is a 245-amino-acid chain: 4-hydroxy-tetrahydrodipicolinate reductase (245 aa).

Residues 7–12 (GAKGKV), 75–77 (GTT), and 102–105 (APNF) each bind NAD(+). The active-site Proton donor/acceptor is histidine 132. Histidine 133 provides a ligand contact to (S)-2,3,4,5-tetrahydrodipicolinate. The active-site Proton donor is lysine 136. 142 to 143 (GT) contributes to the (S)-2,3,4,5-tetrahydrodipicolinate binding site.

Belongs to the DapB family.

Its subcellular location is the cytoplasm. The enzyme catalyses (S)-2,3,4,5-tetrahydrodipicolinate + NAD(+) + H2O = (2S,4S)-4-hydroxy-2,3,4,5-tetrahydrodipicolinate + NADH + H(+). It carries out the reaction (S)-2,3,4,5-tetrahydrodipicolinate + NADP(+) + H2O = (2S,4S)-4-hydroxy-2,3,4,5-tetrahydrodipicolinate + NADPH + H(+). Its pathway is amino-acid biosynthesis; L-lysine biosynthesis via DAP pathway; (S)-tetrahydrodipicolinate from L-aspartate: step 4/4. Catalyzes the conversion of 4-hydroxy-tetrahydrodipicolinate (HTPA) to tetrahydrodipicolinate. In Mycobacterium ulcerans (strain Agy99), this protein is 4-hydroxy-tetrahydrodipicolinate reductase.